Here is a 253-residue protein sequence, read N- to C-terminus: Patatin-like phospholipase domain-containing protein 4 (253 aa).

A PNPLA domain is found at 6-176; it reads LSFAACGFLG…TNALPILPVG (171 aa). The short motif at 41-45 is the GXSXG element; the sequence is GASAG. The Nucleophile role is filled by Ser43. The Proton acceptor role is filled by Asp163. The short motif at 163–165 is the DGA/G element; that stretch reads DGG.

As to expression, expressed in all tissues examined, including heart, brain, placenta, lung, liver, muscle, kidney, pancreas and spleen.

It is found in the mitochondrion. It catalyses the reaction a triacylglycerol + H2O = a diacylglycerol + a fatty acid + H(+). The enzyme catalyses a 1,2-diacyl-sn-glycero-3-phosphocholine + H2O = a 1-acyl-sn-glycero-3-phosphocholine + a fatty acid + H(+). The catalysed reaction is an all-trans-retinyl ester + H2O = all-trans-retinol + a fatty acid + H(+). It carries out the reaction 2 a 1-acylglycerol = a 1,2-diacylglycerol + glycerol. It catalyses the reaction a 1-acylglycerol + a 1,2-diacylglycerol = a triacylglycerol + glycerol. The enzyme catalyses a 1-acylglycerol + a 1,3-diacylglycerol = a triacylglycerol + glycerol. The catalysed reaction is a triacylglycerol + H2O = a 1,2-diacylglycerol + a fatty acid + H(+). It carries out the reaction a triacylglycerol + H2O = a 1,3-diacylglycerol + a fatty acid + H(+). It catalyses the reaction a triacylglycerol + all-trans-retinol = an all-trans-retinyl ester + a diacylglycerol. The enzyme catalyses 2 1-(9Z-octadecenoyl)-glycerol = 1,2-di-(9Z-octadecenoyl)-glycerol + glycerol. The catalysed reaction is 1-(9Z-octadecenoyl)-glycerol + 1,2-di-(9Z-octadecenoyl)-glycerol = 1,2,3-tri-(9Z-octadecenoyl)-glycerol + glycerol. It carries out the reaction 1-(9Z-octadecenoyl)-glycerol + 1,3-di-(9Z-octadecenoyl)-glycerol = 1,2,3-tri-(9Z-octadecenoyl)-glycerol + glycerol. It catalyses the reaction 1,2-di-(9Z-octadecenoyl)-glycerol + (9Z)-octadecenoate + H(+) = 1,2,3-tri-(9Z-octadecenoyl)-glycerol + H2O. The enzyme catalyses 1,2,3-tri-(9Z-octadecenoyl)-glycerol + H2O = 1,3-di-(9Z-octadecenoyl)-glycerol + (9Z)-octadecenoate + H(+). The catalysed reaction is all-trans-retinyl hexadecanoate + H2O = all-trans-retinol + hexadecanoate + H(+). It carries out the reaction 1,2,3-tri-(9Z-octadecenoyl)-glycerol + all-trans-retinol = all-trans-retinyl 9Z-octadecenoate + di-(9Z)-octadecenoylglycerol. With respect to regulation, the triglyceride lipase activity is inhibited by BEL ((E)-6-(bromomethylene)-3-(1-naphthalenyl)-2H-tetrahydropyran-2-one), a suicide substrate inhibitor. In terms of biological role, has abundant triacylglycerol lipase activity. Transfers fatty acid from triglyceride to retinol, hydrolyzes retinylesters, and generates 1,3-diacylglycerol from triglycerides. Additionally possesses acylglycerol transacylase and phospholipase A2 activities. The polypeptide is Patatin-like phospholipase domain-containing protein 4 (Homo sapiens (Human)).